Consider the following 529-residue polypeptide: Bifunctional purine biosynthesis protein PurH (529 aa).

Residues 2 to 148 (QHLRPIRRAL…KNHKDVTIVV (147 aa)) form the MGS-like domain.

It belongs to the PurH family.

The enzyme catalyses (6R)-10-formyltetrahydrofolate + 5-amino-1-(5-phospho-beta-D-ribosyl)imidazole-4-carboxamide = 5-formamido-1-(5-phospho-D-ribosyl)imidazole-4-carboxamide + (6S)-5,6,7,8-tetrahydrofolate. It carries out the reaction IMP + H2O = 5-formamido-1-(5-phospho-D-ribosyl)imidazole-4-carboxamide. Its pathway is purine metabolism; IMP biosynthesis via de novo pathway; 5-formamido-1-(5-phospho-D-ribosyl)imidazole-4-carboxamide from 5-amino-1-(5-phospho-D-ribosyl)imidazole-4-carboxamide (10-formyl THF route): step 1/1. It functions in the pathway purine metabolism; IMP biosynthesis via de novo pathway; IMP from 5-formamido-1-(5-phospho-D-ribosyl)imidazole-4-carboxamide: step 1/1. The chain is Bifunctional purine biosynthesis protein PurH from Proteus mirabilis (strain HI4320).